The primary structure comprises 785 residues: Endonuclease MutS2 (785 aa).

335 to 342 contacts ATP; it reads GPNTGGKT. Residues 710 to 785 form the Smr domain; it reads LDLRGERYED…GNGVTIVEFK (76 aa).

Belongs to the DNA mismatch repair MutS family. MutS2 subfamily. Homodimer. Binds to stalled ribosomes, contacting rRNA.

Functionally, endonuclease that is involved in the suppression of homologous recombination and thus may have a key role in the control of bacterial genetic diversity. Its function is as follows. Acts as a ribosome collision sensor, splitting the ribosome into its 2 subunits. Detects stalled/collided 70S ribosomes which it binds and splits by an ATP-hydrolysis driven conformational change. Acts upstream of the ribosome quality control system (RQC), a ribosome-associated complex that mediates the extraction of incompletely synthesized nascent chains from stalled ribosomes and their subsequent degradation. Probably generates substrates for RQC. The chain is Endonuclease MutS2 from Listeria welshimeri serovar 6b (strain ATCC 35897 / DSM 20650 / CCUG 15529 / CIP 8149 / NCTC 11857 / SLCC 5334 / V8).